The sequence spans 91 residues: Small ribosomal subunit protein uS19 (91 aa).

This sequence belongs to the universal ribosomal protein uS19 family.

Its function is as follows. Protein S19 forms a complex with S13 that binds strongly to the 16S ribosomal RNA. This chain is Small ribosomal subunit protein uS19, found in Synechococcus sp. (strain CC9311).